The primary structure comprises 491 residues: Probable cysteine proteinase 024R (491 aa).

Catalysis depends on residues cysteine 132, histidine 325, and asparagine 355. The helical transmembrane segment at alanine 467 to glycine 487 threads the bilayer.

Belongs to the peptidase C1 family.

It localises to the membrane. Its function is as follows. Probable cysteine protease. In Invertebrate iridescent virus 3 (IIV-3), this protein is Probable cysteine proteinase 024R.